The following is a 309-amino-acid chain: Cell division protein FtsQ (309 aa).

Topologically, residues 1 to 52 (MLALRGRRGKRVRYPADGVAEADEAFVLPRPLRRGVRFLISLGAGRIRFPNH) are cytoplasmic. Residues 53 to 74 (TGTVAAAAFMVATGLYGMSLGG) form a helical membrane-spanning segment. Topologically, residues 75–309 (HTQSFAQVST…KMLKAQEKRI (235 aa)) are periplasmic. Residues 89–157 (FAIEDVRVSG…GTIEVVLKER (69 aa)) form the POTRA domain.

This sequence belongs to the FtsQ/DivIB family. FtsQ subfamily.

The protein localises to the cell inner membrane. Its function is as follows. Essential cell division protein. The chain is Cell division protein FtsQ from Rhizobium meliloti (strain 1021) (Ensifer meliloti).